A 353-amino-acid chain; its full sequence is Holliday junction branch migration complex subunit RuvB (353 aa).

The segment at 4–186 (ADRLIAATHS…FGIVQRLEFY (183 aa)) is large ATPase domain (RuvB-L). Residues Ile-25, Arg-26, Gly-67, Lys-70, Thr-71, Thr-72, 133-135 (EDF), Arg-176, Tyr-186, and Arg-223 each bind ATP. Thr-71 contributes to the Mg(2+) binding site. A small ATPAse domain (RuvB-S) region spans residues 187–257 (STADLATIVS…VADLALNLLD (71 aa)). Residues 260-353 (EHGFDHQDRR…VDEFLDAVDD (94 aa)) are head domain (RuvB-H). DNA-binding residues include Arg-296, Arg-315, and Arg-320.

Belongs to the RuvB family. As to quaternary structure, homohexamer. Forms an RuvA(8)-RuvB(12)-Holliday junction (HJ) complex. HJ DNA is sandwiched between 2 RuvA tetramers; dsDNA enters through RuvA and exits via RuvB. An RuvB hexamer assembles on each DNA strand where it exits the tetramer. Each RuvB hexamer is contacted by two RuvA subunits (via domain III) on 2 adjacent RuvB subunits; this complex drives branch migration. In the full resolvosome a probable DNA-RuvA(4)-RuvB(12)-RuvC(2) complex forms which resolves the HJ.

The protein resides in the cytoplasm. It carries out the reaction ATP + H2O = ADP + phosphate + H(+). Functionally, the RuvA-RuvB-RuvC complex processes Holliday junction (HJ) DNA during genetic recombination and DNA repair, while the RuvA-RuvB complex plays an important role in the rescue of blocked DNA replication forks via replication fork reversal (RFR). RuvA specifically binds to HJ cruciform DNA, conferring on it an open structure. The RuvB hexamer acts as an ATP-dependent pump, pulling dsDNA into and through the RuvAB complex. RuvB forms 2 homohexamers on either side of HJ DNA bound by 1 or 2 RuvA tetramers; 4 subunits per hexamer contact DNA at a time. Coordinated motions by a converter formed by DNA-disengaged RuvB subunits stimulates ATP hydrolysis and nucleotide exchange. Immobilization of the converter enables RuvB to convert the ATP-contained energy into a lever motion, pulling 2 nucleotides of DNA out of the RuvA tetramer per ATP hydrolyzed, thus driving DNA branch migration. The RuvB motors rotate together with the DNA substrate, which together with the progressing nucleotide cycle form the mechanistic basis for DNA recombination by continuous HJ branch migration. Branch migration allows RuvC to scan DNA until it finds its consensus sequence, where it cleaves and resolves cruciform DNA. The polypeptide is Holliday junction branch migration complex subunit RuvB (Pseudomonas fluorescens (strain Pf0-1)).